A 436-amino-acid polypeptide reads, in one-letter code: Septin-7 (436 aa).

S2 is modified (N-acetylserine). Phosphotyrosine is present on Y29. In terms of domain architecture, Septin-type G spans 46–315 (RGFEFTLMVV…ENYRSRKLAA (270 aa)). Positions 46 to 316 (RGFEFTLMVV…NYRSRKLAAV (271 aa)) are interaction with SEPTIN12. Positions 56 to 63 (GESGLGKS) are G1 motif. A GTP-binding site is contributed by 56–63 (GESGLGKS). Position 76 is a phosphoserine (S76). GTP-binding positions include T89, G115, and 194 to 202 (KADTLTPEE). The G3 motif stretch occupies residues 112 to 115 (DTPG). Residues 193–196 (AKAD) form a G4 motif region. T227 carries the post-translational modification Phosphothreonine. Residues G249 and R264 each coordinate GTP. A coiled-coil region spans residues 331–436 (TKSPLAQMEE…EKNKKKGKIF (106 aa)). At S333 the chain carries Phosphoserine. K372 is modified (N6-acetyllysine). Over residues 377–409 (ELQRRHEQMKKNLEAQHKELEEKRRQFEEEKAN) the composition is skewed to basic and acidic residues. Residues 377 to 436 (ELQRRHEQMKKNLEAQHKELEEKRRQFEEEKANWEAQQRILEQQNSSRTLEKNKKKGKIF) are disordered. The residue at position 423 (S423) is a Phosphoserine. At T425 the chain carries Phosphothreonine.

It belongs to the TRAFAC class TrmE-Era-EngA-EngB-Septin-like GTPase superfamily. Septin GTPase family. As to quaternary structure, septins polymerize into heterooligomeric protein complexes that form filaments, and associate with cellular membranes, actin filaments and microtubules. GTPase activity is required for filament formation. Filaments are assembled from asymmetrical heterotrimers, composed of SEPTIN2, SEPTIN6 and SEPTIN7 that associate head-to-head to form a hexameric unit. Within the trimer, directly interacts with SEPTIN6, while interaction with SEPTIN2 seems indirect. In the absence of SEPTIN6, forms homodimers. Interacts directly with CENPE and links CENPE to septin filaments composed of SEPTIN2, SEPTIN6 and SEPTIN7. Interacts with SEPTIN5. Component of a septin core octameric complex consisting of SEPTIN12, SEPTIN7, SEPTIN6 and SEPTIN2 or SEPTIN4 in the order 12-7-6-2-2-6-7-12 or 12-7-6-4-4-6-7-12 and located in the sperm annulus; the SEPTIN12:SEPTIN7 association is mediated by the respective GTP-binding domains. Interacts with SEPTIN2, SEPTIN7, SEPTIN8, SEPTIN9 and SEPTIN11.

It is found in the cytoplasm. The protein resides in the chromosome. Its subcellular location is the centromere. It localises to the kinetochore. The protein localises to the cytoskeleton. It is found in the spindle. The protein resides in the cleavage furrow. Its subcellular location is the midbody. It localises to the cilium axoneme. The protein localises to the cell projection. It is found in the cilium. The protein resides in the flagellum. In terms of biological role, filament-forming cytoskeletal GTPase. Required for normal organization of the actin cytoskeleton. Required for normal progress through mitosis. Involved in cytokinesis. Required for normal association of CENPE with the kinetochore. Plays a role in ciliogenesis and collective cell movements. Forms a filamentous structure with SEPTIN12, SEPTIN6, SEPTIN2 and probably SEPTIN4 at the sperm annulus which is required for the structural integrity and motility of the sperm tail during postmeiotic differentiation. The protein is Septin-7 of Rattus norvegicus (Rat).